We begin with the raw amino-acid sequence, 148 residues long: 3-hydroxyacyl-[acyl-carrier-protein] dehydratase FabZ (148 aa).

The active site involves H47.

This sequence belongs to the thioester dehydratase family. FabZ subfamily.

Its subcellular location is the cytoplasm. The catalysed reaction is a (3R)-hydroxyacyl-[ACP] = a (2E)-enoyl-[ACP] + H2O. Functionally, involved in unsaturated fatty acids biosynthesis. Catalyzes the dehydration of short chain beta-hydroxyacyl-ACPs and long chain saturated and unsaturated beta-hydroxyacyl-ACPs. The polypeptide is 3-hydroxyacyl-[acyl-carrier-protein] dehydratase FabZ (Hydrogenobaculum sp. (strain Y04AAS1)).